Consider the following 251-residue polypeptide: Sugar fermentation stimulation protein homolog (251 aa).

It belongs to the SfsA family.

This chain is Sugar fermentation stimulation protein homolog, found in Symbiobacterium thermophilum (strain DSM 24528 / JCM 14929 / IAM 14863 / T).